We begin with the raw amino-acid sequence, 368 residues long: uncharacterized protein (368 aa).

Belongs to the CdaR family.

This is an uncharacterized protein from Haemophilus influenzae (strain ATCC 51907 / DSM 11121 / KW20 / Rd).